The sequence spans 172 residues: Large ribosomal subunit protein uL10 (172 aa).

The protein belongs to the universal ribosomal protein uL10 family. As to quaternary structure, part of the ribosomal stalk of the 50S ribosomal subunit. The N-terminus interacts with L11 and the large rRNA to form the base of the stalk. The C-terminus forms an elongated spine to which L12 dimers bind in a sequential fashion forming a multimeric L10(L12)X complex.

Functionally, forms part of the ribosomal stalk, playing a central role in the interaction of the ribosome with GTP-bound translation factors. The protein is Large ribosomal subunit protein uL10 of Mesorhizobium japonicum (strain LMG 29417 / CECT 9101 / MAFF 303099) (Mesorhizobium loti (strain MAFF 303099)).